We begin with the raw amino-acid sequence, 320 residues long: MNLPVQTDERQPEQHNQVPDEWFVLNQEKNREADSVKRPSLSYTQDAWRRLKKNKLAMAGLFILLFLFVMAVIGPFLSPHSVVRQSLTEQNLPPSADHWFGTDELGRDVFTRTWYGARISLFVGVMAALIDFLIGVIYGGVAGYKGGRIDSIMMRIIEVLYGLPYLLVVILLMVLMGPGLGTIIVALTVTGWVGMARIVRGQVLQIKNYEYVLASKTFGAKTFRIIRKNLLPNTMGAIIVQMTLTVPAAIFAESFLSFLGLGIQAPFASWGVMANDGLPTILSGHWWRLFFPAFFISLTMYAFNVLGDGLQDALDPKLRR.

Transmembrane regions (helical) follow at residues Leu-56–Phe-76, Leu-121–Val-141, Met-154–Met-176, Leu-230–Ala-252, Phe-267–Trp-287, and Leu-289–Gly-309. In terms of domain architecture, ABC transmembrane type-1 spans Ala-117–Gly-307.

This sequence belongs to the binding-protein-dependent transport system permease family. OppBC subfamily.

It is found in the cell membrane. Functionally, probably part of the ABC transporter DppBCDE involved in dipeptide transport. Responsible for the translocation of the substrate across the membrane. In Bacillus subtilis (strain 168), this protein is Dipeptide transport system permease protein DppC (dppC).